A 201-amino-acid chain; its full sequence is Mediator of RNA polymerase II transcription subunit 19 (201 aa).

Residues 166 to 201 (GTGKSNAKKRKNRSNGSSMATPNSEMQDDVKRRRLE) form a disordered region.

This sequence belongs to the Mediator complex subunit 19 family. As to quaternary structure, component of the Mediator complex.

Its subcellular location is the nucleus. In terms of biological role, component of the Mediator complex, a coactivator involved in the regulated transcription of nearly all RNA polymerase II-dependent genes. Mediator functions as a bridge to convey information from gene-specific regulatory proteins to the basal RNA polymerase II transcription machinery. Mediator is recruited to promoters by direct interactions with regulatory proteins and serves as a scaffold for the assembly of a functional preinitiation complex with RNA polymerase II and the general transcription factors. In Candida glabrata (strain ATCC 2001 / BCRC 20586 / JCM 3761 / NBRC 0622 / NRRL Y-65 / CBS 138) (Yeast), this protein is Mediator of RNA polymerase II transcription subunit 19 (ROX3).